The following is a 779-amino-acid chain: Vezatin (779 aa).

The next 2 membrane-spanning stretches (helical) occupy residues 139–159 and 162–182; these read LATP…LLVM and TWWI…YLVI. Residues 430-462 adopt a coiled-coil conformation; the sequence is VRSLQLHLKALLNEVIILEDELEKLVCTKETQE. 2 disordered regions span residues 618–719 and 757–779; these read PVDP…DSLQ and EQTF…IEEK. Over residues 625 to 634 the composition is skewed to polar residues; the sequence is ISNSEPSMNS. Residues 638 to 649 are compositionally biased toward basic and acidic residues; that stretch reads KVSKNDTEEESN. Polar residues predominate over residues 706–719; that stretch reads GLTTAPPTPRDSLQ. Residues 770–779 are compositionally biased toward basic and acidic residues; sequence EENKNEIEEK.

It belongs to the vezatin family. Interacts with USH2A (via the cytoplasmic region); the interaction associates VEZT with the USH2 complex at the stereocilia base. Interacts with myosin MYO7A and the cadherin-catenins complex.

Its subcellular location is the cell membrane. The protein resides in the cell projection. It localises to the stereocilium membrane. It is found in the cell junction. The protein localises to the adherens junction. Its subcellular location is the nucleus. The protein resides in the cytoplasmic vesicle. It localises to the secretory vesicle. It is found in the acrosome. Plays a pivotal role in the establishment of adherens junctions and their maintenance in adult life. Required for morphogenesis of the preimplantation embryo, and for the implantation process. Its function is as follows. (Microbial infection) In case of Listeria infection, promotes bacterial internalization by participating in myosin VIIa recruitment to the entry site. The chain is Vezatin (VEZT) from Homo sapiens (Human).